The following is a 492-amino-acid chain: Probable sphingolipid transporter spinster homolog 1 (492 aa).

Residues 29–49 (FVTILCIINLINYVDRGVIAS) traverse the membrane as a helical segment. Residues asparagine 53 and asparagine 76 are each glycosylated (N-linked (GlcNAc...) asparagine). The next 7 helical transmembrane spans lie at 83 to 103 (GLLS…FAGL), 119 to 139 (VWTI…IAVF), 141 to 161 (MFVG…IDDS), 169 to 189 (FWLG…YVFG), 200 to 220 (WAFY…FCIK), 279 to 299 (VFIV…AYSY), and 317 to 337 (IFGG…SYVL). Residue asparagine 341 is glycosylated (N-linked (GlcNAc...) asparagine). Transmembrane regions (helical) follow at residues 348–368 (FKLL…AFLM), 372–392 (YAFI…QAPV), 407–427 (LSMA…SSPL), and 442–462 (TLII…GIFM). Serine 472 bears the Phosphoserine mark. Residues 472-481 (SEDDEVEEDK) are compositionally biased toward acidic residues. The segment at 472 to 492 (SEDDEVEEDKLESKTENSTLA) is disordered. N-linked (GlcNAc...) asparagine glycosylation is present at asparagine 488.

This sequence belongs to the major facilitator superfamily. Spinster (TC 2.A.1.49) family.

The protein resides in the late endosome membrane. It is found in the lysosome membrane. Functionally, probable sphingolipid transporter that plays a central role in endosomes and/or lysosomes storage. This chain is Probable sphingolipid transporter spinster homolog 1, found in Arabidopsis thaliana (Mouse-ear cress).